Reading from the N-terminus, the 528-residue chain is Benzoylformate decarboxylase (528 aa).

Asparagine 117, leucine 118, and arginine 120 together coordinate Mg(2+). Positions 377-460 (TSTTAQMWQR…VIMNNGTYGA (84 aa)) are thiamine pyrophosphate binding. Ca(2+) is bound by residues aspartate 428, asparagine 455, and threonine 457.

This sequence belongs to the TPP enzyme family. Homotetramer. Ca(2+) serves as cofactor. Thiamine diphosphate is required as a cofactor. Requires Mg(2+) as cofactor.

It carries out the reaction phenylglyoxylate + H(+) = benzaldehyde + CO2. It participates in aromatic compound metabolism; (R)-mandelate degradation; benzoate from (R)-mandelate: step 3/4. The polypeptide is Benzoylformate decarboxylase (mdlC) (Pseudomonas putida (Arthrobacter siderocapsulatus)).